The following is a 413-amino-acid chain: Serine hydroxymethyltransferase (413 aa).

Residues Leu-119 and 123–125 (GHL) contribute to the (6S)-5,6,7,8-tetrahydrofolate site. N6-(pyridoxal phosphate)lysine is present on Lys-228. 351–353 (SPF) contributes to the (6S)-5,6,7,8-tetrahydrofolate binding site.

This sequence belongs to the SHMT family. In terms of assembly, homodimer. The cofactor is pyridoxal 5'-phosphate.

It localises to the cytoplasm. The catalysed reaction is (6R)-5,10-methylene-5,6,7,8-tetrahydrofolate + glycine + H2O = (6S)-5,6,7,8-tetrahydrofolate + L-serine. It functions in the pathway one-carbon metabolism; tetrahydrofolate interconversion. It participates in amino-acid biosynthesis; glycine biosynthesis; glycine from L-serine: step 1/1. In terms of biological role, catalyzes the reversible interconversion of serine and glycine with tetrahydrofolate (THF) serving as the one-carbon carrier. This reaction serves as the major source of one-carbon groups required for the biosynthesis of purines, thymidylate, methionine, and other important biomolecules. Also exhibits THF-independent aldolase activity toward beta-hydroxyamino acids, producing glycine and aldehydes, via a retro-aldol mechanism. This chain is Serine hydroxymethyltransferase, found in Clostridium botulinum (strain ATCC 19397 / Type A).